The chain runs to 217 residues: Large ribosomal subunit protein uL29m (217 aa).

Belongs to the universal ribosomal protein uL29 family. Component of the mitochondrial large ribosomal subunit. Mature mitochondrial ribosomes consist of a small (37S) and a large (54S) subunit. The 37S subunit contains at least 33 different proteins and 1 molecule of RNA (15S). The 54S subunit contains at least 45 different proteins and 1 molecule of RNA (21S).

The protein localises to the mitochondrion. The protein is Large ribosomal subunit protein uL29m (mrpl4) of Neosartorya fischeri (strain ATCC 1020 / DSM 3700 / CBS 544.65 / FGSC A1164 / JCM 1740 / NRRL 181 / WB 181) (Aspergillus fischerianus).